A 480-amino-acid polypeptide reads, in one-letter code: Methylenetetrahydrofolate--tRNA-(uracil-5-)-methyltransferase TrmFO (480 aa).

15–20 (GGGLAG) lines the FAD pocket.

The protein belongs to the MnmG family. TrmFO subfamily. It depends on FAD as a cofactor.

The protein resides in the cytoplasm. It carries out the reaction uridine(54) in tRNA + (6R)-5,10-methylene-5,6,7,8-tetrahydrofolate + NADH + H(+) = 5-methyluridine(54) in tRNA + (6S)-5,6,7,8-tetrahydrofolate + NAD(+). It catalyses the reaction uridine(54) in tRNA + (6R)-5,10-methylene-5,6,7,8-tetrahydrofolate + NADPH + H(+) = 5-methyluridine(54) in tRNA + (6S)-5,6,7,8-tetrahydrofolate + NADP(+). Its function is as follows. Catalyzes the folate-dependent formation of 5-methyl-uridine at position 54 (M-5-U54) in all tRNAs. The chain is Methylenetetrahydrofolate--tRNA-(uracil-5-)-methyltransferase TrmFO from Caulobacter sp. (strain K31).